The following is a 404-amino-acid chain: S-adenosylmethionine synthase (404 aa).

An ATP-binding site is contributed by 139–144; the sequence is GKGSSD.

It belongs to the AdoMet synthase 2 family. It depends on Mg(2+) as a cofactor.

It carries out the reaction L-methionine + ATP + H2O = S-adenosyl-L-methionine + phosphate + diphosphate. Its pathway is amino-acid biosynthesis; S-adenosyl-L-methionine biosynthesis; S-adenosyl-L-methionine from L-methionine: step 1/1. Functionally, catalyzes the formation of S-adenosylmethionine from methionine and ATP. The polypeptide is S-adenosylmethionine synthase (Saccharolobus solfataricus (strain ATCC 35092 / DSM 1617 / JCM 11322 / P2) (Sulfolobus solfataricus)).